We begin with the raw amino-acid sequence, 172 residues long: Large ribosomal subunit protein uL11m (172 aa).

This sequence belongs to the universal ribosomal protein uL11 family.

The protein resides in the mitochondrion. This is Large ribosomal subunit protein uL11m (mrpl11) from Dictyostelium discoideum (Social amoeba).